A 524-amino-acid polypeptide reads, in one-letter code: 2-isopropylmalate synthase (524 aa).

The 263-residue stretch at 12 to 274 folds into the Pyruvate carboxyltransferase domain; that stretch reads VIIFDTTLRD…WNRIETTMLT (263 aa). Asp-21, His-209, His-211, and Asn-245 together coordinate Mn(2+). The segment at 398-524 is regulatory domain; that stretch reads KLMSLTVIAG…EDAPAVAVAG (127 aa).

Belongs to the alpha-IPM synthase/homocitrate synthase family. LeuA type 1 subfamily. Homodimer. Requires Mn(2+) as cofactor.

Its subcellular location is the cytoplasm. The catalysed reaction is 3-methyl-2-oxobutanoate + acetyl-CoA + H2O = (2S)-2-isopropylmalate + CoA + H(+). Its pathway is amino-acid biosynthesis; L-leucine biosynthesis; L-leucine from 3-methyl-2-oxobutanoate: step 1/4. Its function is as follows. Catalyzes the condensation of the acetyl group of acetyl-CoA with 3-methyl-2-oxobutanoate (2-ketoisovalerate) to form 3-carboxy-3-hydroxy-4-methylpentanoate (2-isopropylmalate). In Rhodopseudomonas palustris (strain ATCC BAA-98 / CGA009), this protein is 2-isopropylmalate synthase.